A 242-amino-acid polypeptide reads, in one-letter code: EF-hand domain-containing protein D2 (242 aa).

Residues 1-53 (MATDELASKLSRRLQMEGEGGGEAPEQPGLNGAAAAAAAAGAPDETAEALGSA) form a disordered region. At Ala-2 the chain carries N-acetylalanine. Ser-11 carries the phosphoserine modification. Low complexity predominate over residues 32–42 (GAAAAAAAAGA). A phosphoserine mark is found at Ser-76 and Ser-78. Tyr-85 is subject to Phosphotyrosine. EF-hand domains follow at residues 94 to 129 (KQIK…LGAP) and 130 to 165 (QTHL…AAAG). Residues Asp-107, Asp-111, Glu-118, Asp-143, Asp-145, Asp-147, Lys-149, and Glu-154 each coordinate Ca(2+). Lys-235 is modified (N6-acetyllysine).

Interacts with CASP9; with inactive form.

The protein localises to the membrane raft. Its function is as follows. May regulate B-cell receptor (BCR)-induced immature and primary B-cell apoptosis. Plays a role as negative regulator of the canonical NF-kappa-B-activating branch. Controls spontaneous apoptosis through the regulation of BCL2L1 abundance. This chain is EF-hand domain-containing protein D2 (EFHD2), found in Bos taurus (Bovine).